The chain runs to 1435 residues: Gag-Pol polyprotein (1435 aa).

Gly2 carries the N-myristoyl glycine; by host lipid modification. An interaction with Gp41 region spans residues 7-31; that stretch reads VLSAGELDKWEKIRLRPGGKKQYRL. Residues 8–43 form an interaction with host CALM1 region; it reads LSAGELDKWEKIRLRPGGKKQYRLKHIVWASRELER. The interval 12 to 19 is interaction with host AP3D1; the sequence is ELDKWEKI. The tract at residues 14–33 is interaction with membrane phosphatidylinositol 4,5-bisphosphate and RNA; the sequence is DKWEKIRLRPGGKKQYRLKH. The Nuclear export signal signature appears at 16–22; it reads WEKIRLR. A Nuclear localization signal motif is present at residues 26–32; it reads KKQYRLK. Positions 73-77 are interaction with membrane phosphatidylinositol 4,5-bisphosphate; sequence EELRS. The tract at residues 106 to 128 is disordered; sequence EEQNKSKKKAQQAAADTGNSSQV. A Phosphotyrosine; by host modification is found at Tyr132. Residues 189 to 227 form an interaction with human PPIA/CYPA and NUP153 region; sequence NTVGGHQAAMQMLKETINEEAAEWDRLHPVHAGPIAPGQ. The dimerization/Multimerization of capsid protein p24 stretch occupies residues 277–363; the sequence is YSPTSILDIR…GGPGHKARVL (87 aa). 2 CCHC-type zinc fingers span residues 390 to 407 and 411 to 428; these read VKCF…NCRA and KGCW…DCTE. The tract at residues 489 to 493 is dimerization of protease; that stretch reads PQITL. The 70-residue stretch at 508 to 577 folds into the Peptidase A2 domain; sequence KEALLDTGAD…TPVNIIGRNL (70 aa). Residue Asp513 is the For protease activity; shared with dimeric partner of the active site. Dimerization of protease stretches follow at residues 537–543 and 576–588; these read GIGGFIK and NLLT…LNFP. The 191-residue stretch at 631 to 821 folds into the Reverse transcriptase domain; that stretch reads EGKISKIGPE…PPFLWMGYEL (191 aa). Asp697, Asp772, and Asp773 together coordinate Mg(2+). The interval 814-822 is RT 'primer grip'; it reads FLWMGYELH. Positions 985–1001 match the Tryptophan repeat motif motif; it reads WETWWTEYWQATWIPEW. One can recognise an RNase H type-1 domain in the interval 1021–1144; it reads IIGAETFYVD…VDKLVSAGIR (124 aa). Asp1030, Glu1065, Asp1085, and Asp1136 together coordinate Mg(2+). The Integrase-type zinc-finger motif lies at 1150-1191; that stretch reads DGIDKAQEEHEKYHSNWRAMASDFNLPPVVAKEIVASCDKCQ. The Zn(2+) site is built by His1159, His1163, Cys1187, and Cys1190. An Integrase catalytic domain is found at 1201-1351; that stretch reads VDCSPGIWQL…SAGERIVDII (151 aa). Residues Asp1211, Asp1263, and Glu1299 each contribute to the Mg(2+) site. Residues 1370–1417 constitute a DNA-binding region (integrase-type); the sequence is FRVYYRDSRDPLWKGPAKLLWKGEGAVVIQDNSDIKVVPRRKAKIIRD.

Homotrimer; further assembles as hexamers of trimers. Interacts with gp41 (via C-terminus). Interacts with host CALM1; this interaction induces a conformational change in the Matrix protein, triggering exposure of the myristate group. Interacts with host AP3D1; this interaction allows the polyprotein trafficking to multivesicular bodies during virus assembly. Part of the pre-integration complex (PIC) which is composed of viral genome, matrix protein, Vpr and integrase. In terms of assembly, homodimer; the homodimer further multimerizes as homohexamers or homopentamers. Interacts with human PPIA/CYPA; This interaction stabilizes the capsid. Interacts with human NUP153. Interacts with host PDZD8; this interaction stabilizes the capsid. Interacts with monkey TRIM5; this interaction destabilizes the capsid. As to quaternary structure, homodimer, whose active site consists of two apposed aspartic acid residues. Heterodimer of p66 RT and p51 RT (RT p66/p51). Heterodimerization of RT is essential for DNA polymerase activity. The overall folding of the subdomains is similar in p66 RT and p51 RT but the spatial arrangements of the subdomains are dramatically different. In terms of assembly, homotetramer; may further associate as a homohexadecamer. Part of the pre-integration complex (PIC) which is composed of viral genome, matrix protein, Vpr and integrase. Interacts with human SMARCB1/INI1 and human PSIP1/LEDGF isoform 1. Interacts with human KPNA3; this interaction might play a role in nuclear import of the pre-integration complex. Interacts with human NUP153; this interaction might play a role in nuclear import of the pre-integration complex. The cofactor is Mg(2+). Post-translationally, specific enzymatic cleavages by the viral protease yield mature proteins. The protease is released by autocatalytic cleavage. The polyprotein is cleaved during and after budding, this process is termed maturation. Proteolytic cleavage of p66 RT removes the RNase H domain to yield the p51 RT subunit. Nucleocapsid protein p7 might be further cleaved after virus entry. Tyrosine phosphorylated presumably in the virion by a host kinase. Phosphorylation is apparently not a major regulator of membrane association. In terms of processing, phosphorylated possibly by host MAPK1; this phosphorylation is necessary for Pin1-mediated virion uncoating. Post-translationally, methylated by host PRMT6, impairing its function by reducing RNA annealing and the initiation of reverse transcription.

The protein localises to the host cell membrane. The protein resides in the host endosome. It localises to the host multivesicular body. Its subcellular location is the virion membrane. It is found in the host nucleus. The protein localises to the host cytoplasm. The protein resides in the virion. The enzyme catalyses Specific for a P1 residue that is hydrophobic, and P1' variable, but often Pro.. The catalysed reaction is Endohydrolysis of RNA in RNA/DNA hybrids. Three different cleavage modes: 1. sequence-specific internal cleavage of RNA. Human immunodeficiency virus type 1 and Moloney murine leukemia virus enzymes prefer to cleave the RNA strand one nucleotide away from the RNA-DNA junction. 2. RNA 5'-end directed cleavage 13-19 nucleotides from the RNA end. 3. DNA 3'-end directed cleavage 15-20 nucleotides away from the primer terminus.. It carries out the reaction 3'-end directed exonucleolytic cleavage of viral RNA-DNA hybrid.. It catalyses the reaction DNA(n) + a 2'-deoxyribonucleoside 5'-triphosphate = DNA(n+1) + diphosphate. Its activity is regulated as follows. Protease: The viral protease is inhibited by many synthetic protease inhibitors (PIs), such as amprenavir, atazanavir, indinavir, loprinavir, nelfinavir, ritonavir and saquinavir. Use of protease inhibitors in tritherapy regimens permit more ambitious therapeutic strategies. Reverse transcriptase/ribonuclease H: RT can be inhibited either by nucleoside RT inhibitors (NRTIs) or by non nucleoside RT inhibitors (NNRTIs). NRTIs act as chain terminators, whereas NNRTIs inhibit DNA polymerization by binding a small hydrophobic pocket near the RT active site and inducing an allosteric change in this region. Classical NRTIs are abacavir, adefovir (PMEA), didanosine (ddI), lamivudine (3TC), stavudine (d4T), tenofovir (PMPA), zalcitabine (ddC), and zidovudine (AZT). Classical NNRTIs are atevirdine (BHAP U-87201E), delavirdine, efavirenz (DMP-266), emivirine (I-EBU), and nevirapine (BI-RG-587). The tritherapies used as a basic effective treatment of AIDS associate two NRTIs and one NNRTI. Mediates, with Gag polyprotein, the essential events in virion assembly, including binding the plasma membrane, making the protein-protein interactions necessary to create spherical particles, recruiting the viral Env proteins, and packaging the genomic RNA via direct interactions with the RNA packaging sequence (Psi). Gag-Pol polyprotein may regulate its own translation, by the binding genomic RNA in the 5'-UTR. At low concentration, the polyprotein would promote translation, whereas at high concentration, the polyprotein would encapsidate genomic RNA and then shut off translation. Its function is as follows. Targets the polyprotein to the plasma membrane via a multipartite membrane-binding signal, that includes its myristoylated N-terminus. Matrix protein is part of the pre-integration complex. Implicated in the release from host cell mediated by Vpu. Binds to RNA. In terms of biological role, forms the conical core that encapsulates the genomic RNA-nucleocapsid complex in the virion. Most core are conical, with only 7% tubular. The core is constituted by capsid protein hexamer subunits. The core is disassembled soon after virion entry. Host restriction factors such as TRIM5-alpha or TRIMCyp bind retroviral capsids and cause premature capsid disassembly, leading to blocks in reverse transcription. Capsid restriction by TRIM5 is one of the factors which restricts HIV-1 to the human species. Host PIN1 apparently facilitates the virion uncoating. On the other hand, interactions with PDZD8 or CYPA stabilize the capsid. Functionally, encapsulates and protects viral dimeric unspliced genomic RNA (gRNA). Binds these RNAs through its zinc fingers. Acts as a nucleic acid chaperone which is involved in rearangement of nucleic acid secondary structure during gRNA retrotranscription. Also facilitates template switch leading to recombination. As part of the polyprotein, participates in gRNA dimerization, packaging, tRNA incorporation and virion assembly. Aspartyl protease that mediates proteolytic cleavages of Gag and Gag-Pol polyproteins during or shortly after the release of the virion from the plasma membrane. Cleavages take place as an ordered, step-wise cascade to yield mature proteins. This process is called maturation. Displays maximal activity during the budding process just prior to particle release from the cell. Also cleaves Nef and Vif, probably concomitantly with viral structural proteins on maturation of virus particles. Hydrolyzes host EIF4GI and PABP1 in order to shut off the capped cellular mRNA translation. The resulting inhibition of cellular protein synthesis serves to ensure maximal viral gene expression and to evade host immune response. Also mediates cleavage of host YTHDF3. Mediates cleavage of host CARD8, thereby activating the CARD8 inflammasome, leading to the clearance of latent HIV-1 in patient CD4(+) T-cells after viral reactivation; in contrast, HIV-1 can evade CARD8-sensing when its protease remains inactive in infected cells prior to viral budding. Its function is as follows. Multifunctional enzyme that converts the viral RNA genome into dsDNA in the cytoplasm, shortly after virus entry into the cell. This enzyme displays a DNA polymerase activity that can copy either DNA or RNA templates, and a ribonuclease H (RNase H) activity that cleaves the RNA strand of RNA-DNA heteroduplexes in a partially processive 3' to 5' endonucleasic mode. Conversion of viral genomic RNA into dsDNA requires many steps. A tRNA(3)-Lys binds to the primer-binding site (PBS) situated at the 5'-end of the viral RNA. RT uses the 3' end of the tRNA primer to perform a short round of RNA-dependent minus-strand DNA synthesis. The reading proceeds through the U5 region and ends after the repeated (R) region which is present at both ends of viral RNA. The portion of the RNA-DNA heteroduplex is digested by the RNase H, resulting in a ssDNA product attached to the tRNA primer. This ssDNA/tRNA hybridizes with the identical R region situated at the 3' end of viral RNA. This template exchange, known as minus-strand DNA strong stop transfer, can be either intra- or intermolecular. RT uses the 3' end of this newly synthesized short ssDNA to perform the RNA-dependent minus-strand DNA synthesis of the whole template. RNase H digests the RNA template except for two polypurine tracts (PPTs) situated at the 5'-end and near the center of the genome. It is not clear if both polymerase and RNase H activities are simultaneous. RNase H probably can proceed both in a polymerase-dependent (RNA cut into small fragments by the same RT performing DNA synthesis) and a polymerase-independent mode (cleavage of remaining RNA fragments by free RTs). Secondly, RT performs DNA-directed plus-strand DNA synthesis using the PPTs that have not been removed by RNase H as primers. PPTs and tRNA primers are then removed by RNase H. The 3' and 5' ssDNA PBS regions hybridize to form a circular dsDNA intermediate. Strand displacement synthesis by RT to the PBS and PPT ends produces a blunt ended, linear dsDNA copy of the viral genome that includes long terminal repeats (LTRs) at both ends. In terms of biological role, catalyzes viral DNA integration into the host chromosome, by performing a series of DNA cutting and joining reactions. This enzyme activity takes place after virion entry into a cell and reverse transcription of the RNA genome in dsDNA. The first step in the integration process is 3' processing. This step requires a complex comprising the viral genome, matrix protein, Vpr and integrase. This complex is called the pre-integration complex (PIC). The integrase protein removes 2 nucleotides from each 3' end of the viral DNA, leaving recessed CA OH's at the 3' ends. In the second step, the PIC enters cell nucleus. This process is mediated through integrase and Vpr proteins, and allows the virus to infect a non dividing cell. This ability to enter the nucleus is specific of lentiviruses, other retroviruses cannot and rely on cell division to access cell chromosomes. In the third step, termed strand transfer, the integrase protein joins the previously processed 3' ends to the 5' ends of strands of target cellular DNA at the site of integration. The 5'-ends are produced by integrase-catalyzed staggered cuts, 5 bp apart. A Y-shaped, gapped, recombination intermediate results, with the 5'-ends of the viral DNA strands and the 3' ends of target DNA strands remaining unjoined, flanking a gap of 5 bp. The last step is viral DNA integration into host chromosome. This involves host DNA repair synthesis in which the 5 bp gaps between the unjoined strands are filled in and then ligated. Since this process occurs at both cuts flanking the HIV genome, a 5 bp duplication of host DNA is produced at the ends of HIV-1 integration. Alternatively, Integrase may catalyze the excision of viral DNA just after strand transfer, this is termed disintegration. The sequence is that of Gag-Pol polyprotein (gag-pol) from Homo sapiens (Human).